The sequence spans 66 residues: Type 3 secretion system chaperone YscE (66 aa).

It belongs to the YscE family. In terms of assembly, component of the heterodimeric YscE-YscG chaperone. The YscE-YscG chaperone forms a stable ternary complex with YscF/SctF. YscE interacts with YscG, but makes very little direct contact with YscF. Homodimer in solution.

It is found in the cytoplasm. Its function is as follows. Chaperone of the type III secretion system (T3SS), also called injectisome, which is used to inject bacterial effector proteins into eukaryotic host cells. Along with YscG, prevents premature polymerization of the YscF/SctF needle protein within the cytoplasm. Is also required for stable expression of cytosolic YscF and for YscF secretion. Likely plays a role in targeting YscF present in the cytosolic YscEFG complex to the T3SS apparatus. Required for Yop secretion. This chain is Type 3 secretion system chaperone YscE, found in Yersinia pestis.